Reading from the N-terminus, the 315-residue chain is Glycine--tRNA ligase alpha subunit (315 aa).

This sequence belongs to the class-II aminoacyl-tRNA synthetase family. In terms of assembly, tetramer of two alpha and two beta subunits.

It localises to the cytoplasm. The catalysed reaction is tRNA(Gly) + glycine + ATP = glycyl-tRNA(Gly) + AMP + diphosphate. The sequence is that of Glycine--tRNA ligase alpha subunit from Pseudomonas aeruginosa (strain LESB58).